The sequence spans 444 residues: uncharacterized protein (444 aa).

Lys268 carries the post-translational modification N6-(pyridoxal phosphate)lysine.

This sequence belongs to the class-III pyridoxal-phosphate-dependent aminotransferase family. The cofactor is pyridoxal 5'-phosphate.

This is an uncharacterized protein from Bacillus subtilis (strain 168).